Here is a 517-residue protein sequence, read N- to C-terminus: uncharacterized protein (517 aa).

10 helical membrane-spanning segments follow: residues 35-55, 81-101, 102-122, 135-155, 164-184, 223-243, 268-288, 302-322, 328-348, and 352-372; these read FSLIVLSFIVSFFLIVAIPGI, IAIYTLAALAFSFCMSVGVFN, IGISGQMMAGANFGFMMILKV, IITILLMILGSVTVAMVVAAL, VVSAIMLNWVIVLVSAYLVGT, LVIAIAAAIFIAVLMKFTVFG, FLSFVISGILSGLLAAVVYTA, FGITSVPITGFDGIAIGLIAL, IVIVSTIISFVTIGAKPAGLN, and ASLVLGIMMYFAAIYNLMIYI.

It localises to the cell membrane. This is an uncharacterized protein from Mycoplasma pneumoniae (strain ATCC 29342 / M129 / Subtype 1) (Mycoplasmoides pneumoniae).